Reading from the N-terminus, the 513-residue chain is GMP synthase [glutamine-hydrolyzing] (513 aa).

One can recognise a Glutamine amidotransferase type-1 domain in the interval 9 to 198 (LILVLDFGSQ…VRRVCDCIGE (190 aa)). Cysteine 86 serves as the catalytic Nucleophile. Active-site residues include histidine 172 and glutamate 174. A GMPS ATP-PPase domain is found at 199–388 (WSMENFIEIE…LGIPEHLVWR (190 aa)). 226–232 (SGGVDSS) contacts ATP.

Homodimer.

It catalyses the reaction XMP + L-glutamine + ATP + H2O = GMP + L-glutamate + AMP + diphosphate + 2 H(+). It participates in purine metabolism; GMP biosynthesis; GMP from XMP (L-Gln route): step 1/1. Its function is as follows. Catalyzes the synthesis of GMP from XMP. This chain is GMP synthase [glutamine-hydrolyzing], found in Staphylococcus saprophyticus subsp. saprophyticus (strain ATCC 15305 / DSM 20229 / NCIMB 8711 / NCTC 7292 / S-41).